A 377-amino-acid polypeptide reads, in one-letter code: Succinyl-diaminopimelate desuccinylase (377 aa).

Position 66 (histidine 66) interacts with Zn(2+). Residue aspartate 68 is part of the active site. Aspartate 99 serves as a coordination point for Zn(2+). The active-site Proton acceptor is glutamate 133. Zn(2+) is bound by residues glutamate 134, glutamate 163, and histidine 349.

This sequence belongs to the peptidase M20A family. DapE subfamily. Homodimer. Zn(2+) serves as cofactor. Requires Co(2+) as cofactor.

The catalysed reaction is N-succinyl-(2S,6S)-2,6-diaminopimelate + H2O = (2S,6S)-2,6-diaminopimelate + succinate. Its pathway is amino-acid biosynthesis; L-lysine biosynthesis via DAP pathway; LL-2,6-diaminopimelate from (S)-tetrahydrodipicolinate (succinylase route): step 3/3. Its function is as follows. Catalyzes the hydrolysis of N-succinyl-L,L-diaminopimelic acid (SDAP), forming succinate and LL-2,6-diaminopimelate (DAP), an intermediate involved in the bacterial biosynthesis of lysine and meso-diaminopimelic acid, an essential component of bacterial cell walls. The sequence is that of Succinyl-diaminopimelate desuccinylase from Legionella pneumophila (strain Lens).